Here is a 299-residue protein sequence, read N- to C-terminus: GTPase Era (299 aa).

In terms of domain architecture, Era-type G spans 4 to 171 (KSGFVAILGR…IKLLTDNLEE (168 aa)). The G1 stretch occupies residues 12 to 19 (GRPNVGKS). Residue 12 to 19 (GRPNVGKS) participates in GTP binding. The segment at 38-42 (QTTRN) is G2. Positions 59–62 (DTPG) are G3. GTP contacts are provided by residues 59–63 (DTPGI) and 121–124 (NKID). The interval 121–124 (NKID) is G4. The G5 stretch occupies residues 150–152 (ISA). Positions 202-280 (TQQEVPHSVA…YLETWVKVKK (79 aa)) constitute a KH type-2 domain.

It belongs to the TRAFAC class TrmE-Era-EngA-EngB-Septin-like GTPase superfamily. Era GTPase family. As to quaternary structure, monomer.

It localises to the cytoplasm. The protein localises to the cell membrane. Functionally, an essential GTPase that binds both GDP and GTP, with rapid nucleotide exchange. Plays a role in 16S rRNA processing and 30S ribosomal subunit biogenesis and possibly also in cell cycle regulation and energy metabolism. In Streptococcus agalactiae serotype III (strain NEM316), this protein is GTPase Era.